Here is a 421-residue protein sequence, read N- to C-terminus: ATP-dependent RNA helicase RhlB (421 aa).

Positions 9 to 37 (QKFSDFALHPKVVEALEKKGFHNCTPIQA) match the Q motif motif. In terms of domain architecture, Helicase ATP-binding spans 40–219 (LPLTLAGRDV…FEQMNNAEYI (180 aa)). 53–60 (AQTGTGKT) is a binding site for ATP. The DEAD box motif lies at 165–168 (DEAD). A Helicase C-terminal domain is found at 245–390 (RLLQTLIEEE…VSKYNPDALM (146 aa)). Residues 392–421 (DLPKPLRLTRPRTGNGPRRTGAPRNRRRSG) are disordered. The span at 402–414 (PRTGNGPRRTGAP) shows a compositional bias: low complexity.

This sequence belongs to the DEAD box helicase family. RhlB subfamily. As to quaternary structure, component of the RNA degradosome, which is a multiprotein complex involved in RNA processing and mRNA degradation.

The protein resides in the cytoplasm. The catalysed reaction is ATP + H2O = ADP + phosphate + H(+). Its function is as follows. DEAD-box RNA helicase involved in RNA degradation. Has RNA-dependent ATPase activity and unwinds double-stranded RNA. The polypeptide is ATP-dependent RNA helicase RhlB (Escherichia coli O157:H7).